The sequence spans 335 residues: Probable cytosolic iron-sulfur protein assembly protein Ciao1 (335 aa).

WD repeat units lie at residues 12 to 51 (GHKGRIWGVAWHPKGNVFASCGEDKAIRIWSLTGNTWSTK), 57 to 96 (GHKRTIREIRWSPCGQYLASASFDATTAIWSKSSGEFECN), 101 to 140 (GHENEVKSVSWSRSGGLLATCSRDKSVWIWEVAGDDEFEC), 146 to 185 (PHTQDVKRVVWHPTKDVLASASYDNTIKMFAEEPIDNDWD), 192 to 231 (SHTSTVWGIDFDADGERLVSCSDDTTIKIWKAYHPGNTAG), 250 to 289 (QHSRAIYDVSWCKLTGLIATACGDDGIRIFKETSDSKPDE), and 301 to 335 (AHDQDVNSVQWNPVVAGQLISCSDDGTIKIWKVSE).

Belongs to the WD repeat CIA1 family.

In terms of biological role, essential component of the cytosolic iron-sulfur (Fe/S) protein assembly machinery. Required for the maturation of extramitochondrial Fe/S proteins. The polypeptide is Probable cytosolic iron-sulfur protein assembly protein Ciao1 (Drosophila simulans (Fruit fly)).